A 131-amino-acid chain; its full sequence is Small ribosomal subunit protein uS8 (131 aa).

Belongs to the universal ribosomal protein uS8 family. As to quaternary structure, part of the 30S ribosomal subunit. Contacts proteins S5 and S12.

In terms of biological role, one of the primary rRNA binding proteins, it binds directly to 16S rRNA central domain where it helps coordinate assembly of the platform of the 30S subunit. This Acidithiobacillus ferrooxidans (strain ATCC 23270 / DSM 14882 / CIP 104768 / NCIMB 8455) (Ferrobacillus ferrooxidans (strain ATCC 23270)) protein is Small ribosomal subunit protein uS8.